The chain runs to 330 residues: AP-1-like transcription factor YAP3 (330 aa).

The interval 114–150 (SYSNTNYFSKNNGISPSSRSPSVAHNENVPDDSKAKK) is disordered. Positions 121–138 (FSKNNGISPSSRSPSVAH) are enriched in polar residues. S135 carries the phosphoserine modification. The region spanning 144-207 (DDSKAKKKAQ…TEINAENRLL (64 aa)) is the bZIP domain. The tract at residues 147–168 (KAKKKAQNRAAQKAFRERKEAR) is basic motif. The segment at 172-207 (LQDKLLESERNRQSLLKEIEELRKANTEINAENRLL) is leucine-zipper.

The protein belongs to the bZIP family. YAP subfamily. As to quaternary structure, homodimer. Interacts with the C-terminal, cytoplasmic tail of the multidrug resistance ABC transporter PDR5.

Its subcellular location is the cytoplasm. It localises to the nucleus. Transcription activator involved in the regulation of genes expressed in response to environmental changes. When overexpressed it activates transcription of the multidrug resistance ABC transporter PDR5, thus conferring resistance to the fungicide fluconazole (FCZ) and cycloheximide. When overexpressed, it also confers, independent of PDR5, increased resistance to 4-nitroquinoline-N-oxide (4-NQO). Preferentially binds 5'-TTACTAA-3'. This Saccharomyces cerevisiae (strain ATCC 204508 / S288c) (Baker's yeast) protein is AP-1-like transcription factor YAP3 (YAP3).